We begin with the raw amino-acid sequence, 81 residues long: NADH-ubiquinone oxidoreductase chain 6 (81 aa).

Transmembrane regions (helical) follow at residues 1-21 (MTYFVFFLGICFVVGVLGVAS), 27-47 (YGVVGLVLASVAGCGWLLSLG), and 48-68 (VSFVALVLFMVYFGGMLVVFV).

The protein belongs to the complex I subunit 6 family.

The protein localises to the mitochondrion membrane. The catalysed reaction is a ubiquinone + NADH + 5 H(+)(in) = a ubiquinol + NAD(+) + 4 H(+)(out). In terms of biological role, core subunit of the mitochondrial membrane respiratory chain NADH dehydrogenase (Complex I) that is believed to belong to the minimal assembly required for catalysis. Complex I functions in the transfer of electrons from NADH to the respiratory chain. The immediate electron acceptor for the enzyme is believed to be ubiquinone. This Anas platyrhynchos (Mallard) protein is NADH-ubiquinone oxidoreductase chain 6 (MT-ND6).